Here is a 379-residue protein sequence, read N- to C-terminus: Chaperone protein DnaJ (379 aa).

The J domain maps to 4-69 (DLYETLGVKK…QKRAAYDRYG (66 aa)). The segment at 137–215 (GKTAQIRVPT…CHGQGRVTEE (79 aa)) adopts a CR-type zinc-finger fold. Positions 150, 153, 167, 170, 189, 192, 203, and 206 each coordinate Zn(2+). 4 CXXCXGXG motif repeats span residues 150 to 157 (CDVCTGSG), 167 to 174 (CATCQGSG), 189 to 196 (CPTCGGRG), and 203 to 210 (CTKCHGQG).

It belongs to the DnaJ family. In terms of assembly, homodimer. The cofactor is Zn(2+).

The protein resides in the cytoplasm. Functionally, participates actively in the response to hyperosmotic and heat shock by preventing the aggregation of stress-denatured proteins and by disaggregating proteins, also in an autonomous, DnaK-independent fashion. Unfolded proteins bind initially to DnaJ; upon interaction with the DnaJ-bound protein, DnaK hydrolyzes its bound ATP, resulting in the formation of a stable complex. GrpE releases ADP from DnaK; ATP binding to DnaK triggers the release of the substrate protein, thus completing the reaction cycle. Several rounds of ATP-dependent interactions between DnaJ, DnaK and GrpE are required for fully efficient folding. Also involved, together with DnaK and GrpE, in the DNA replication of plasmids through activation of initiation proteins. The protein is Chaperone protein DnaJ of Sinorhizobium fredii (strain NBRC 101917 / NGR234).